A 30-amino-acid chain; its full sequence is M-poneritoxin-Ng3a (30 aa).

Expressed by the venom gland.

It is found in the secreted. Its function is as follows. Shows a broad spectrum of activity against both Gram-positive and Gram-negative bacteria. Also has antimicrobial activity against S.cerevisiae. Has insecticidal and non-hemolytic activity. This Neoponera goeldii (Ponerine ant) protein is M-poneritoxin-Ng3a.